A 216-amino-acid polypeptide reads, in one-letter code: Probable nicotinate-nucleotide adenylyltransferase (216 aa).

The protein belongs to the NadD family.

It carries out the reaction nicotinate beta-D-ribonucleotide + ATP + H(+) = deamido-NAD(+) + diphosphate. Its pathway is cofactor biosynthesis; NAD(+) biosynthesis; deamido-NAD(+) from nicotinate D-ribonucleotide: step 1/1. Catalyzes the reversible adenylation of nicotinate mononucleotide (NaMN) to nicotinic acid adenine dinucleotide (NaAD). The protein is Probable nicotinate-nucleotide adenylyltransferase of Citrifermentans bemidjiense (strain ATCC BAA-1014 / DSM 16622 / JCM 12645 / Bem) (Geobacter bemidjiensis).